We begin with the raw amino-acid sequence, 740 residues long: Glycerol dehydrogenase large subunit (740 aa).

Residues 1–29 (MRRPYLLATAAGLALACSPLIAHAQFAPA) form the signal peptide. 2 disordered regions span residues 28 to 105 (PAGA…GDWV) and 442 to 468 (LPVE…PWSV). The segment covering 34-43 (EPSSSVPGPG) has biased composition (low complexity). A compositionally biased stretch (polar residues) spans 46-58 (SEPTENSPKSQSY).

Belongs to the bacterial PQQ dehydrogenase family. Pyrroloquinoline quinone serves as cofactor.

It localises to the secreted. It catalyses the reaction glycerol + A = dihydroxyacetone + AH2. Catalyzes the oxidation of glycerol to glycerone. Also acts, more slowly, on a number of other polyols including D-sorbitol, D-arabinitol, D-mannitol, meso-erythritol, adonitol and propylene glycol. The polypeptide is Glycerol dehydrogenase large subunit (sldA) (Gluconobacter thailandicus).